Reading from the N-terminus, the 140-residue chain is Pro-variola growth factor (140 aa).

An N-terminal signal peptide occupies residues methionine 1 to phenylalanine 18. The Extracellular portion of the chain corresponds to alanine 19–tyrosine 100. The N-linked (GlcNAc...) asparagine; by host glycan is linked to asparagine 34. The EGF-like domain occupies alanine 41–glutamine 81. 3 disulfide bridges follow: cysteine 45–cysteine 58, cysteine 53–cysteine 69, and cysteine 71–cysteine 80. An N-linked (GlcNAc...) asparagine; by host glycan is attached at asparagine 95. A helical transmembrane segment spans residues isoleucine 101–phenylalanine 121. Over valine 122 to proline 140 the chain is Cytoplasmic.

The protein belongs to the orthopoxvirus OPG019 family. As to quaternary structure, variola growth factor interacts with host EGFR and promotes EGFR dimerization.

Its subcellular location is the host membrane. It localises to the secreted. Functionally, stimulates cellular proliferation (hyperplasia)and mobility around infected cells to promote rapid and efficient spread of infection. This effect is beneficial for virus replication in vivo, because poxviruses replicate possibly better in proliferating cells than in quiescent cells. Acts by binding host EGFR, inducing its dimerization, autophosphorylation and leading to activation of several cellular pathways regulating cell proliferation or cell survival. The activation by host EGFR of mitogen activated protein kinases (MAPK) and extracellular-signal regulated kinases (ERK) are essential for the positive effect of vaccinia growth factor on poxvirus virulence in vivo. The protein is Pro-variola growth factor (OPG019) of Variola virus.